A 202-amino-acid chain; its full sequence is Shikimate kinase (202 aa).

Residue 20–25 (GSGKST) coordinates ATP. Residue S24 coordinates Mg(2+). Residues D42, R66, and G88 each contribute to the substrate site. R126 is a binding site for ATP. Substrate is bound at residue R153.

The protein belongs to the shikimate kinase family. Monomer. The cofactor is Mg(2+).

Its subcellular location is the cytoplasm. It catalyses the reaction shikimate + ATP = 3-phosphoshikimate + ADP + H(+). It participates in metabolic intermediate biosynthesis; chorismate biosynthesis; chorismate from D-erythrose 4-phosphate and phosphoenolpyruvate: step 5/7. Functionally, catalyzes the specific phosphorylation of the 3-hydroxyl group of shikimic acid using ATP as a cosubstrate. This is Shikimate kinase from Chlorobium luteolum (strain DSM 273 / BCRC 81028 / 2530) (Pelodictyon luteolum).